The chain runs to 479 residues: Adenosylhomocysteinase (479 aa).

Residues threonine 66, aspartate 142, and glutamate 203 each coordinate substrate. Residue 204 to 206 (TTT) participates in NAD(+) binding. The substrate site is built by lysine 233 and aspartate 237. NAD(+) is bound by residues asparagine 238, 267-272 (GYGDVG), glutamate 290, asparagine 325, 346-348 (IGH), and asparagine 394.

It belongs to the adenosylhomocysteinase family. The cofactor is NAD(+).

The protein localises to the cytoplasm. It carries out the reaction S-adenosyl-L-homocysteine + H2O = L-homocysteine + adenosine. It participates in amino-acid biosynthesis; L-homocysteine biosynthesis; L-homocysteine from S-adenosyl-L-homocysteine: step 1/1. Functionally, may play a key role in the regulation of the intracellular concentration of adenosylhomocysteine. In Nitratidesulfovibrio vulgaris (strain DSM 19637 / Miyazaki F) (Desulfovibrio vulgaris), this protein is Adenosylhomocysteinase.